The primary structure comprises 131 residues: uncharacterized protein (131 aa).

The interval 60–100 (GRHTLSQVPNKGHEKASAVQLPEKQGTDQSRRGPTSAVTKA) is disordered. The span at 91–100 (RGPTSAVTKA) shows a compositional bias: polar residues.

This is an uncharacterized protein from Homo sapiens (Human).